A 403-amino-acid polypeptide reads, in one-letter code: Synaptotagmin-7 (403 aa).

Residues 1 to 16 (MYRDPEAASPGAPSRD) are Vesicular-facing. The helical transmembrane segment at 17–37 (VLLVSAIITVSLSVTVVLCGL) threads the bilayer. At 38–403 (CHWCQRKLGK…PVAQWHQLKA (366 aa)) the chain is on the cytoplasmic side. At Ser52 the chain carries Phosphoserine. The disordered stretch occupies residues 53 to 106 (LETVGTPDSGRGRSEKKAIKLPAGGKAVNTAPVPGQTPHDESDRRTEPRSSVSD). Thr58 bears the Phosphothreonine mark. Ser61 bears the Phosphoserine mark. Over residues 90–100 (PHDESDRRTEP) the composition is skewed to basic and acidic residues. Ser119 and Ser122 each carry phosphoserine. 2 consecutive C2 domains span residues 135-255 (NLGR…TFWK) and 266-399 (SRGE…AQWH). Residues Asp166, Asp172, Asp225, Asp227, Ser230, Asp233, Asp297, Asp303, Asp357, Asp359, Ser362, and Asp365 each coordinate Ca(2+).

This sequence belongs to the synaptotagmin family. In terms of assembly, homodimer. Can also form heterodimers with SYT6, SYT9 and SYT10. Interacts with calmodulin (CALM1, CALM2 or CALM3). Interacts with CD63; required for localization to lysosomes. Interacts with APP. The cofactor is Ca(2+). In terms of processing, palmitoylated at its vesicular N-terminus; palmitoylation is required for localization to lysosome and phagocytosis in macrophages. As to expression, expressed in a variety of adult and fetal tissues.

It is found in the cell membrane. Its subcellular location is the presynaptic cell membrane. The protein localises to the cytoplasmic vesicle. The protein resides in the secretory vesicle. It localises to the synaptic vesicle membrane. It is found in the lysosome membrane. Its subcellular location is the phagosome membrane. The protein localises to the peroxisome membrane. The protein resides in the secretory vesicle membrane. Its function is as follows. Ca(2+) sensor involved in Ca(2+)-dependent exocytosis of secretory and synaptic vesicles through Ca(2+) and phospholipid binding to the C2 domain. Ca(2+) induces binding of the C2-domains to phospholipid membranes and to assembled SNARE-complexes; both actions contribute to triggering exocytosis. SYT7 binds Ca(2+) with high affinity and slow kinetics compared to other synaptotagmins. Involved in Ca(2+)-triggered lysosomal exocytosis, a major component of the plasma membrane repair. Ca(2+)-regulated delivery of lysosomal membranes to the cell surface is also involved in the phagocytic uptake of particles by macrophages. Ca(2+)-triggered lysosomal exocytosis also plays a role in bone remodeling by regulating secretory pathways in osteoclasts and osteoblasts. In case of infection, involved in participates cell invasion by Trypanosoma cruzi via Ca(2+)-triggered lysosomal exocytosis. Involved in cholesterol transport from lysosome to peroxisome by promoting membrane contacts between lysosomes and peroxisomes: probably acts by promoting vesicle fusion by binding phosphatidylinositol-4,5-bisphosphate on peroxisomal membranes. Acts as a key mediator of synaptic facilitation, a process also named short-term synaptic potentiation: synaptic facilitation takes place at synapses with a low initial release probability and is caused by influx of Ca(2+) into the axon terminal after spike generation, increasing the release probability of neurotransmitters. Probably mediates synaptic facilitation by directly increasing the probability of release. May also contribute to synaptic facilitation by regulating synaptic vesicle replenishment, a process required to ensure that synaptic vesicles are ready for the arrival of the next action potential: SYT7 is required for synaptic vesicle replenishment by acting as a sensor for Ca(2+) and by forming a complex with calmodulin. Also acts as a regulator of Ca(2+)-dependent insulin and glucagon secretion in beta-cells. Triggers exocytosis by promoting fusion pore opening and fusion pore expansion in chromaffin cells. Also regulates the secretion of some non-synaptic secretory granules of specialized cells. This is Synaptotagmin-7 from Homo sapiens (Human).